A 156-amino-acid polypeptide reads, in one-letter code: Acyl carrier protein, mitochondrial (156 aa).

A mitochondrion-targeting transit peptide spans Met1–Tyr68. A Carrier domain is found at Glu77–Lys152. Position 88 is an N6-acetyllysine (Lys88). Ser112 is subject to O-(pantetheine 4'-phosphoryl)serine.

In terms of assembly, mammalian complex I is composed of 45 different subunits. Interacts with ETFRF1. Identified in a complex composed of MALSU1, MIEF1 upstream open reading frame protein and NDUFAB1; within the trimeric complex MIEF1 upstream open reading frame protein functions as a bridging scaffold that interacts with MALSU1 on one side, and with NDUFAB1 on the other side. The complex interacts with the mitochondrial large ribosomal subunit. Interacts with alpha-1-microglobulin chain; this interaction is required for the maintenance of mitochondrial redox homeostasis. Component of the mitochondrial core iron-sulfur cluster (ISC) complex composed of NFS1, LYRM4, NDUFAB1, ISCU, FXN, and FDX2; this complex is a heterohexamer containing two copies of each monomer. Component of the cyteine desulfurase complex composed of NFS1, LYRM4 and NDUFAB1; this complex contributes to the stability and cysteine desulfurase activity of NFS1. Post-translationally, phosphopantetheinylation at Ser-112 is essential for interactions with LYR motif-containing proteins.

The protein localises to the mitochondrion. Its function is as follows. Carrier of the growing fatty acid chain in fatty acid biosynthesis. Accessory and non-catalytic subunit of the mitochondrial membrane respiratory chain NADH dehydrogenase (Complex I), which functions in the transfer of electrons from NADH to the respiratory chain. Accessory protein, of the core iron-sulfur cluster (ISC) assembly complex, that regulates, in association with LYRM4, the stability and the cysteine desulfurase activity of NFS1 and participates in the [2Fe-2S] clusters assembly on the scaffolding protein ISCU. The core iron-sulfur cluster (ISC) assembly complex is involved in the de novo synthesis of a [2Fe-2S] cluster, the first step of the mitochondrial iron-sulfur protein biogenesis. This process is initiated by the cysteine desulfurase complex (NFS1:LYRM4:NDUFAB1) that produces persulfide which is delivered on the scaffold protein ISCU in a FXN-dependent manner. Then this complex is stabilized by FDX2 which provides reducing equivalents to accomplish the [2Fe-2S] cluster assembly. Finally, the [2Fe-2S] cluster is transferred from ISCU to chaperone proteins, including HSCB, HSPA9 and GLRX5. In Bos taurus (Bovine), this protein is Acyl carrier protein, mitochondrial.